A 161-amino-acid chain; its full sequence is UPF0178 protein BSUIS_A1819 (161 aa).

This sequence belongs to the UPF0178 family.

This chain is UPF0178 protein BSUIS_A1819, found in Brucella suis (strain ATCC 23445 / NCTC 10510).